A 734-amino-acid chain; its full sequence is MATKFPKFSQGLAQDPTTRRIWFGIATAHDFESHDGMTEENLYQKIFASHFGQLAIIFLWTSGNLFHVAWQGNFEQWIKDPLHIRPIAHAIWDPHFGQPAVEAFTRGGASGPVNIATSGVYQWWYTIGMRTNQELYTASVFLSLMAGVFLFAGWLHLQPKFQPSLSWFKNAESRLNHHLSGLFGVSSLAWTGHLVHVAIPAARGQRVGWDNFLTTLPHPEGLTPFFTGNWAAYAANPDSANHIFGTSAGAGTAILTFLGGFHPQTQSLWLTDIAHHHLAIAVVFIIAGHQYRTNFGIGHSMREILDAHTPPAGGLGAGHKGLFDTVNNSLHFQLGLALASVGTICSMVAQHIYSLPPYAFLAQDYTAQAALYTHHQYIAGFIMCGAFAHGAIFFIRDYDPEQNKGNVLARILDHKEAIISHLSWVSLFLGFHTLGLYVHNDVMQAFGTPEKQILIEPVFAQWIQAAQGKALYGFDFLLSSSASPAYSASQSVWLPGWLDAINSNNNSLFLTIGPGDFLVHHAIALGLHTTTLILVKGALDARGSKLMPDKKDFGYSFPCDGPGRGGTCDISAWDAFYLAVFWMLNTIGWVTFYFHWKHLGIWQGNVSQFNESSTYLMGWLRDYLWLNSSQLINGYNPNGMNSLGVWSWAFLLAHLIYATGFMFLISWRGYWQELIETLVWSHERTPLASLVRWRDKPVALSIVQARLVGLVHFSVGYVLTYGSFLIASTSSKFG.

8 helical membrane passes run isoleucine 46–alanine 69, leucine 135–glutamine 158, leucine 175–isoleucine 199, isoleucine 273–tyrosine 291, leucine 330–tyrosine 353, alanine 369–isoleucine 395, alanine 417–histidine 439, and phenylalanine 517–valine 535. 2 residues coordinate [4Fe-4S] cluster: cysteine 559 and cysteine 568. A run of 2 helical transmembrane segments spans residues alanine 575–tryptophan 596 and leucine 643–isoleucine 665. Chlorophyll a contacts are provided by histidine 654, methionine 662, and tyrosine 670. Position 671 (tryptophan 671) interacts with phylloquinone. A helical membrane pass occupies residues leucine 707–alanine 727.

The protein belongs to the PsaA/PsaB family. As to quaternary structure, the PsaA/B heterodimer binds the P700 chlorophyll special pair and subsequent electron acceptors. PSI consists of a core antenna complex that captures photons, and an electron transfer chain that converts photonic excitation into a charge separation. The eukaryotic PSI reaction center is composed of at least 11 subunits. Requires P700 is a chlorophyll a/chlorophyll a' dimer, A0 is one or more chlorophyll a, A1 is one or both phylloquinones and FX is a shared 4Fe-4S iron-sulfur center. as cofactor.

It is found in the plastid. Its subcellular location is the chloroplast thylakoid membrane. The catalysed reaction is reduced [plastocyanin] + hnu + oxidized [2Fe-2S]-[ferredoxin] = oxidized [plastocyanin] + reduced [2Fe-2S]-[ferredoxin]. In terms of biological role, psaA and PsaB bind P700, the primary electron donor of photosystem I (PSI), as well as the electron acceptors A0, A1 and FX. PSI is a plastocyanin/cytochrome c6-ferredoxin oxidoreductase, converting photonic excitation into a charge separation, which transfers an electron from the donor P700 chlorophyll pair to the spectroscopically characterized acceptors A0, A1, FX, FA and FB in turn. Oxidized P700 is reduced on the lumenal side of the thylakoid membrane by plastocyanin or cytochrome c6. This Oltmannsiellopsis viridis (Marine flagellate) protein is Photosystem I P700 chlorophyll a apoprotein A2.